We begin with the raw amino-acid sequence, 1463 residues long: DNA polymerase III PolC-type (1463 aa).

An Exonuclease domain is found at Y425 to L581.

The protein belongs to the DNA polymerase type-C family. PolC subfamily.

It localises to the cytoplasm. The enzyme catalyses DNA(n) + a 2'-deoxyribonucleoside 5'-triphosphate = DNA(n+1) + diphosphate. In terms of biological role, required for replicative DNA synthesis. This DNA polymerase also exhibits 3' to 5' exonuclease activity. This Streptococcus suis (strain 98HAH33) protein is DNA polymerase III PolC-type.